Here is a 662-residue protein sequence, read N- to C-terminus: Methionine--tRNA ligase (662 aa).

A 'HIGH' region motif is present at residues 13-23 (PYTNGPCHLGH). Residues cysteine 144, cysteine 147, cysteine 156, and cysteine 160 each coordinate Zn(2+). Residues 326–330 (KFSKS) carry the 'KMSKS' region motif. Lysine 329 is an ATP binding site. The tRNA-binding domain occupies 564–662 (DFSKVEIKTG…KPVEPGTKIR (99 aa)).

The protein belongs to the class-I aminoacyl-tRNA synthetase family. MetG type 1 subfamily. In terms of assembly, homodimer. Requires Zn(2+) as cofactor.

The protein resides in the cytoplasm. It carries out the reaction tRNA(Met) + L-methionine + ATP = L-methionyl-tRNA(Met) + AMP + diphosphate. Its function is as follows. Is required not only for elongation of protein synthesis but also for the initiation of all mRNA translation through initiator tRNA(fMet) aminoacylation. This is Methionine--tRNA ligase from Methanoregula boonei (strain DSM 21154 / JCM 14090 / 6A8).